We begin with the raw amino-acid sequence, 436 residues long: Enolase (436 aa).

Residue Q167 participates in (2R)-2-phosphoglycerate binding. E209 (proton donor) is an active-site residue. Mg(2+)-binding residues include D246, E291, and D318. Residues K343, R372, S373, and K394 each contribute to the (2R)-2-phosphoglycerate site. Residue K343 is the Proton acceptor of the active site.

It belongs to the enolase family. In terms of assembly, component of the RNA degradosome, a multiprotein complex involved in RNA processing and mRNA degradation. The cofactor is Mg(2+).

The protein localises to the cytoplasm. It localises to the secreted. The protein resides in the cell surface. It catalyses the reaction (2R)-2-phosphoglycerate = phosphoenolpyruvate + H2O. The protein operates within carbohydrate degradation; glycolysis; pyruvate from D-glyceraldehyde 3-phosphate: step 4/5. Its function is as follows. Catalyzes the reversible conversion of 2-phosphoglycerate (2-PG) into phosphoenolpyruvate (PEP). It is essential for the degradation of carbohydrates via glycolysis. The sequence is that of Enolase from Haemophilus influenzae (strain 86-028NP).